The sequence spans 508 residues: DEAD-box ATP-dependent RNA helicase 8 (508 aa).

The segment at M1 to Y123 is disordered. Over residues N18–P53 the composition is skewed to low complexity. The segment covering Q54–Q64 has biased composition (basic residues). The Q motif signature appears at N134–E162. The region spanning I165–I335 is the Helicase ATP-binding domain. A178–T185 contributes to the ATP binding site. The DEAD box signature appears at D283 to D286. The region spanning G345–I505 is the Helicase C-terminal domain.

Belongs to the DEAD box helicase family. DDX6/DHH1 subfamily.

It is found in the cytoplasm. The protein localises to the P-body. The enzyme catalyses ATP + H2O = ADP + phosphate + H(+). In terms of biological role, ATP-dependent RNA helicase involved in mRNA turnover, and more specifically in mRNA decapping. The sequence is that of DEAD-box ATP-dependent RNA helicase 8 from Oryza sativa subsp. japonica (Rice).